The chain runs to 434 residues: ATP-dependent protease ATPase subunit HslU (434 aa).

ATP contacts are provided by residues Val-18, 60 to 65 (GVGKTE), Asp-247, Glu-312, and Arg-384.

It belongs to the ClpX chaperone family. HslU subfamily. In terms of assembly, a double ring-shaped homohexamer of HslV is capped on each side by a ring-shaped HslU homohexamer. The assembly of the HslU/HslV complex is dependent on binding of ATP.

The protein localises to the cytoplasm. In terms of biological role, ATPase subunit of a proteasome-like degradation complex; this subunit has chaperone activity. The binding of ATP and its subsequent hydrolysis by HslU are essential for unfolding of protein substrates subsequently hydrolyzed by HslV. HslU recognizes the N-terminal part of its protein substrates and unfolds these before they are guided to HslV for hydrolysis. This is ATP-dependent protease ATPase subunit HslU from Bradyrhizobium sp. (strain ORS 278).